Reading from the N-terminus, the 146-residue chain is Snaclec coagulation factor IX/factor X-binding protein subunit B (146 aa).

An N-terminal signal peptide occupies residues 1–23; sequence MGRFIFLSFGLLVVFLSLSGTGA. Cystine bridges form between C25–C36, C53–C142, and C119–C134. In terms of domain architecture, C-type lectin spans 32–143; it reads YEGHCYKPFN…CRMEAYFVCE (112 aa). Positions 64 and 70 each coordinate Ca(2+). E143 lines the Ca(2+) pocket.

This sequence belongs to the snaclec family. As to quaternary structure, heterodimer with subunit A of IX/X-bp or IX-bp; disulfide-linked. Expressed by the venom gland.

Its subcellular location is the secreted. When linked to subunit A of IX/X-bp, anticoagulant protein which binds to the gamma-carboxyglutamic acid-domain regions of factors IX (F9) and factor X (F10) in the presence of calcium with a 1 to 1 stoichiometry. Functionally, when linked to subunit A of IX-bp, anticoagulant protein which binds to the gamma-carboxyglutamic acid-domain regions of factor IX (but not to factor X) in the presence of calcium with a 1 to 1 stoichiometry. This chain is Snaclec coagulation factor IX/factor X-binding protein subunit B, found in Gloydius halys (Chinese water mocassin).